A 146-amino-acid chain; its full sequence is Large ribosomal subunit protein uL13 (146 aa).

The protein belongs to the universal ribosomal protein uL13 family. As to quaternary structure, part of the 50S ribosomal subunit.

In terms of biological role, this protein is one of the early assembly proteins of the 50S ribosomal subunit, although it is not seen to bind rRNA by itself. It is important during the early stages of 50S assembly. This chain is Large ribosomal subunit protein uL13, found in Mycoplasma genitalium (strain ATCC 33530 / DSM 19775 / NCTC 10195 / G37) (Mycoplasmoides genitalium).